A 319-amino-acid chain; its full sequence is Methionyl-tRNA formyltransferase (319 aa).

116–119 lines the (6S)-5,6,7,8-tetrahydrofolate pocket; sequence SLLP.

The protein belongs to the Fmt family.

It carries out the reaction L-methionyl-tRNA(fMet) + (6R)-10-formyltetrahydrofolate = N-formyl-L-methionyl-tRNA(fMet) + (6S)-5,6,7,8-tetrahydrofolate + H(+). Attaches a formyl group to the free amino group of methionyl-tRNA(fMet). The formyl group appears to play a dual role in the initiator identity of N-formylmethionyl-tRNA by promoting its recognition by IF2 and preventing the misappropriation of this tRNA by the elongation apparatus. The polypeptide is Methionyl-tRNA formyltransferase (Treponema pallidum (strain Nichols)).